We begin with the raw amino-acid sequence, 273 residues long: Manganese catalase (273 aa).

Glu35 is a Mn(2+) binding site. Asp57 and Asp61 together coordinate Ca(2+). Residues Glu66, His69, Glu149, and His182 each contribute to the Mn(2+) site. Ca(2+) is bound by residues Asn220, Ser222, and Gly224. The disordered stretch occupies residues 254–273 (EKPELKPAPPFVHNTLPGRE).

This sequence belongs to the manganese catalase family. Requires Ca(2+) as cofactor. Mn(2+) serves as cofactor.

The catalysed reaction is 2 H2O2 = O2 + 2 H2O. Functionally, catalyzes the decomposition of hydrogen peroxide into water and oxygen. The polypeptide is Manganese catalase (ydbD) (Bacillus subtilis (strain 168)).